The sequence spans 405 residues: Imidazolonepropionase (405 aa).

Residues histidine 73 and histidine 75 each contribute to the Fe(3+) site. Zn(2+)-binding residues include histidine 73 and histidine 75. 3 residues coordinate 4-imidazolone-5-propanoate: arginine 82, tyrosine 145, and histidine 178. Tyrosine 145 is an N-formimidoyl-L-glutamate binding site. Histidine 243 serves as a coordination point for Fe(3+). Residue histidine 243 participates in Zn(2+) binding. Glutamine 246 serves as a coordination point for 4-imidazolone-5-propanoate. Position 318 (aspartate 318) interacts with Fe(3+). A Zn(2+)-binding site is contributed by aspartate 318. Asparagine 320 and glycine 322 together coordinate N-formimidoyl-L-glutamate. 4-imidazolone-5-propanoate is bound at residue threonine 323.

The protein belongs to the metallo-dependent hydrolases superfamily. HutI family. Requires Zn(2+) as cofactor. It depends on Fe(3+) as a cofactor.

Its subcellular location is the cytoplasm. The catalysed reaction is 4-imidazolone-5-propanoate + H2O = N-formimidoyl-L-glutamate. It participates in amino-acid degradation; L-histidine degradation into L-glutamate; N-formimidoyl-L-glutamate from L-histidine: step 3/3. Catalyzes the hydrolytic cleavage of the carbon-nitrogen bond in imidazolone-5-propanoate to yield N-formimidoyl-L-glutamate. It is the third step in the universal histidine degradation pathway. This is Imidazolonepropionase from Brucella anthropi (strain ATCC 49188 / DSM 6882 / CCUG 24695 / JCM 21032 / LMG 3331 / NBRC 15819 / NCTC 12168 / Alc 37) (Ochrobactrum anthropi).